The primary structure comprises 373 residues: ATP phosphoribosyltransferase regulatory subunit (373 aa).

This sequence belongs to the class-II aminoacyl-tRNA synthetase family. HisZ subfamily. In terms of assembly, heteromultimer composed of HisG and HisZ subunits.

Its subcellular location is the cytoplasm. It participates in amino-acid biosynthesis; L-histidine biosynthesis; L-histidine from 5-phospho-alpha-D-ribose 1-diphosphate: step 1/9. In terms of biological role, required for the first step of histidine biosynthesis. May allow the feedback regulation of ATP phosphoribosyltransferase activity by histidine. The polypeptide is ATP phosphoribosyltransferase regulatory subunit (Rhizobium etli (strain ATCC 51251 / DSM 11541 / JCM 21823 / NBRC 15573 / CFN 42)).